The primary structure comprises 366 residues: Dihydroorotate dehydrogenase (quinone) (366 aa).

FMN is bound by residues 74–78 (AGFDK) and threonine 98. Residue lysine 78 coordinates substrate. 123–127 (NRMGF) is a substrate binding site. Asparagine 156 and asparagine 189 together coordinate FMN. Position 189 (asparagine 189) interacts with substrate. Residue serine 192 is the Nucleophile of the active site. Asparagine 194 serves as a coordination point for substrate. Residues lysine 231 and threonine 259 each coordinate FMN. A substrate-binding site is contributed by 260–261 (NT). Residues glycine 285, glycine 314, and 335 to 336 (YT) each bind FMN.

This sequence belongs to the dihydroorotate dehydrogenase family. Type 2 subfamily. Monomer. Requires FMN as cofactor.

The protein localises to the cell membrane. It catalyses the reaction (S)-dihydroorotate + a quinone = orotate + a quinol. The protein operates within pyrimidine metabolism; UMP biosynthesis via de novo pathway; orotate from (S)-dihydroorotate (quinone route): step 1/1. Its function is as follows. Catalyzes the conversion of dihydroorotate to orotate with quinone as electron acceptor. The sequence is that of Dihydroorotate dehydrogenase (quinone) from Kineococcus radiotolerans (strain ATCC BAA-149 / DSM 14245 / SRS30216).